A 777-amino-acid chain; its full sequence is Hepatocyte growth factor-regulated tyrosine kinase substrate (777 aa).

Residues 15–143 (ATSQLLLETD…IMKVEGHVFP (129 aa)) form the VHS domain. Residues 160–220 (WVDAEECHRC…VCEPCYEQLN (61 aa)) form an FYVE-type zinc finger. Residues Cys166, Cys169, Cys182, Cys185, Cys190, and Cys193 each contribute to the Zn(2+) site. Lys207 carries the N6-acetyllysine modification. 2 residues coordinate Zn(2+): Cys212 and Cys215. Tyr216 carries the post-translational modification Phosphotyrosine. Residues 223–319 (AEGKATSTTE…SPVNSSAPLA (97 aa)) are disordered. The tract at residues 225–543 (GKATSTTELP…QRLQEQEKER (319 aa)) is interaction with SNX1. The UIM domain occupies 258-277 (QEEEELQLALALSQSEAEEK). Positions 290-311 (PKAEPMPSASSAPPASSLYSSP) are enriched in low complexity. 3 positions are modified to phosphotyrosine: Tyr308, Tyr329, and Tyr334. A disordered region spans residues 338–407 (KQEEARKSPT…NGESEESHEQ (70 aa)). The interval 445–543 (SINGMHPQLL…QRLQEQEKER (99 aa)) is interaction with SNAP25 and TRAK2. Residues 454–572 (LELLNQLDER…FPLPYAQLQA (119 aa)) are interaction with STAM. Positions 480-777 (ARGALSALRE…GSEAQLISFD (298 aa)) are interaction with NF2. The residue at position 551 (Lys551) is an N6-succinyllysine. The interval 718–777 (LPSQDASLPPQQPYIAGQQPMYQQMAPSGGPPQQQPPVAQQPQAQGPPAQGSEAQLISFD) is disordered. Over residues 753-768 (PPVAQQPQAQGPPAQG) the composition is skewed to low complexity.

Component of the ESCRT-0 complex composed of STAM or STAM2 and HGS. Part of a complex at least composed of HSG, STAM2 (or probably STAM) and EPS15. Interacts with STAM. Interacts with STAM2. Interacts with EPS15; the interaction is direct, calcium-dependent and inhibited by SNAP25. Identified in a complex with STAM and LITAF. Found in a complex with STAM and E3 ligase ITCH and DTX3L. Interacts with E3 ligase DTX3L; the interaction brings together STAM and HSG, promotes their recruitment to early endosomes and decreases STAM and HGS ubiquitination by ITCH. Interacts with NF2; the interaction is direct. Interacts with ubiquitin; the interaction is direct. Interacts with VPS37C. Interacts with SMAD1, SMAD2 and SMAD3. Interacts with TSG101; the interaction mediates the association with the ESCRT-I complex. Interacts with SNAP25; the interaction is direct and decreases with addition of increasing concentrations of free calcium. Interacts with SNX1; the interaction is direct. Component of a 550 kDa membrane complex at least composed of HGS and SNX1 but excluding EGFR. Interacts with TRAK1. Interacts with TRAK2. Component of the CART complex, at least composed of ACTN4, HGS/HRS, MYO5B and TRIM3. Interacts (via UIM domain) with UBQLN1 (via ubiquitin-like domain). Interacts with ARRDC3. Identified in a complex containing at least ARRDC4, AVPR2 and HGS. Interacts with LAPTM4B; promotes HGS ubiquitination. Post-translationally, phosphorylated on Tyr-334. A minor site of phosphorylation on Tyr-329 is detected. Phosphorylation occurs in response to EGF, IL-2, GM-CSF and HGF. Ubiquitinated. Ubiquitinated by ITCH. As to expression, ubiquitous expression in adult and fetal tissues with higher expression in testis and peripheral blood leukocytes.

It localises to the cytoplasm. The protein resides in the early endosome membrane. Its subcellular location is the endosome. It is found in the multivesicular body membrane. Its function is as follows. Involved in intracellular signal transduction mediated by cytokines and growth factors. When associated with STAM, it suppresses DNA signaling upon stimulation by IL-2 and GM-CSF. Could be a direct effector of PI3-kinase in vesicular pathway via early endosomes and may regulate trafficking to early and late endosomes by recruiting clathrin. May concentrate ubiquitinated receptors within clathrin-coated regions. Involved in down-regulation of receptor tyrosine kinase via multivesicular body (MVBs) when complexed with STAM (ESCRT-0 complex). The ESCRT-0 complex binds ubiquitin and acts as a sorting machinery that recognizes ubiquitinated receptors and transfers them to further sequential lysosomal sorting/trafficking processes. May contribute to the efficient recruitment of SMADs to the activin receptor complex. Involved in receptor recycling via its association with the CART complex, a multiprotein complex required for efficient transferrin receptor recycling but not for EGFR degradation. This is Hepatocyte growth factor-regulated tyrosine kinase substrate (HGS) from Homo sapiens (Human).